The chain runs to 696 residues: Glycine--tRNA ligase beta subunit (696 aa).

The protein belongs to the class-II aminoacyl-tRNA synthetase family. Tetramer of two alpha and two beta subunits.

Its subcellular location is the cytoplasm. The enzyme catalyses tRNA(Gly) + glycine + ATP = glycyl-tRNA(Gly) + AMP + diphosphate. The chain is Glycine--tRNA ligase beta subunit from Methylorubrum extorquens (strain CM4 / NCIMB 13688) (Methylobacterium extorquens).